Reading from the N-terminus, the 252-residue chain is Ribosomal RNA small subunit methyltransferase J (252 aa).

Residues Arg-101 to Asp-102, Glu-117 to Arg-118, Ser-153 to Ser-154, and Asp-171 each bind S-adenosyl-L-methionine.

This sequence belongs to the methyltransferase superfamily. RsmJ family.

Its subcellular location is the cytoplasm. The enzyme catalyses guanosine(1516) in 16S rRNA + S-adenosyl-L-methionine = N(2)-methylguanosine(1516) in 16S rRNA + S-adenosyl-L-homocysteine + H(+). Specifically methylates the guanosine in position 1516 of 16S rRNA. The chain is Ribosomal RNA small subunit methyltransferase J from Salmonella dublin (strain CT_02021853).